Consider the following 277-residue polypeptide: S-formylglutathione hydrolase FrmB (277 aa).

Active-site charge relay system residues include S145, D221, and H254.

This sequence belongs to the esterase D family.

It catalyses the reaction S-formylglutathione + H2O = formate + glutathione + H(+). Serine hydrolase involved in the detoxification of formaldehyde. Hydrolyzes S-formylglutathione to glutathione and formate. This chain is S-formylglutathione hydrolase FrmB (frmB), found in Escherichia coli (strain K12 / DH10B).